The primary structure comprises 131 residues: Cilia- and flagella-associated protein 144 (131 aa).

The tract at residues 79–99 (TKKYSEPQTESQEIGWNTTPL) is disordered. Residues 84–99 (EPQTESQEIGWNTTPL) are compositionally biased toward polar residues.

It belongs to the CFAP144 family. In terms of tissue distribution, expressed in choroid plexus (at protein level). Expressed by motile ciliated cells in choroid plexus.

It is found in the cytoplasm. The protein localises to the cytoskeleton. It localises to the cilium axoneme. The protein resides in the flagellum axoneme. Functionally, microtubule inner protein (MIP) part of the dynein-decorated doublet microtubules (DMTs) in cilia axoneme, which is required for motile cilia beating. The sequence is that of Cilia- and flagella-associated protein 144 (CFAP144) from Gallus gallus (Chicken).